The following is a 282-amino-acid chain: ATP synthase gamma chain (282 aa).

It belongs to the ATPase gamma chain family. In terms of assembly, F-type ATPases have 2 components, CF(1) - the catalytic core - and CF(0) - the membrane proton channel. CF(1) has five subunits: alpha(3), beta(3), gamma(1), delta(1), epsilon(1). CF(0) has three main subunits: a, b and c.

The protein resides in the cell membrane. In terms of biological role, produces ATP from ADP in the presence of a proton gradient across the membrane. The gamma chain is believed to be important in regulating ATPase activity and the flow of protons through the CF(0) complex. This chain is ATP synthase gamma chain, found in Clostridium botulinum (strain Loch Maree / Type A3).